A 791-amino-acid chain; its full sequence is ATP-dependent 6-phosphofructokinase, platelet type (791 aa).

Methionine 1 bears the N-acetylmethionine mark. Residues 1 to 399 (MDNKVSASPR…NLNTYKRLAI (399 aa)) are N-terminal catalytic PFK domain 1. Position 6 is a phosphoserine (serine 6). Residue serine 12 is modified to Phosphoserine; by PKA. Serine 21 is subject to Phosphoserine. ATP-binding positions include glycine 34, 97–98 (RS), and 127–130 (GSGS). The residue at position 142 (serine 142) is a Phosphoserine. Substrate-binding positions include 173 to 175 (SID), arginine 210, 217 to 219 (MGR), glutamate 273, arginine 301, and 307 to 310 (HVQR). The active-site Proton acceptor is the aspartate 175. Serine 386 bears the Phosphoserine mark. Position 395 is an N6-acetyllysine (lysine 395). The tract at residues 400 to 411 (KLPDDKIQKSNC) is interdomain linker. Residues 412–791 (NVAVINVGAP…RGGPEEPAAI (380 aa)) form a C-terminal regulatory PFK domain 2 region. Arginine 481 lines the beta-D-fructose 2,6-bisphosphate pocket. Lysine 486 carries the post-translational modification N6-acetyllysine. Residues 538–542 (TVSNN), arginine 576, 583–585 (MGG), and glutamate 639 contribute to the beta-D-fructose 2,6-bisphosphate site. Serine 540 is a glycosylation site (O-linked (GlcNAc) serine). Position 651 is a phosphotyrosine (tyrosine 651). Beta-D-fructose 2,6-bisphosphate is bound by residues arginine 665 and 671-674 (HMQQ). Lysine 688 is modified (N6-acetyllysine). Arginine 744 provides a ligand contact to beta-D-fructose 2,6-bisphosphate.

This sequence belongs to the phosphofructokinase type A (PFKA) family. ATP-dependent PFK group I subfamily. Eukaryotic two domain clade 'E' sub-subfamily. As to quaternary structure, homo- and heterotetramers. Phosphofructokinase (PFK) enzyme functions as a tetramer composed of different combinations of 3 types of subunits, called PFKM (M), PFKL (L) and PFKP (P). The composition of the PFK tetramer differs according to the tissue type it is present in. The kinetic and regulatory properties of the tetrameric enzyme are dependent on the subunit composition, hence can vary across tissues. Interacts with ATG4B; promoting phosphorylation of ATG4B. It depends on Mg(2+) as a cofactor. Post-translationally, glcNAcylation decreases enzyme activity. Phosphorylation at Ser-386 promotes interaction with ATG4B.

The protein resides in the cytoplasm. It catalyses the reaction beta-D-fructose 6-phosphate + ATP = beta-D-fructose 1,6-bisphosphate + ADP + H(+). The protein operates within carbohydrate degradation; glycolysis; D-glyceraldehyde 3-phosphate and glycerone phosphate from D-glucose: step 3/4. Its activity is regulated as follows. Allosterically activated by ADP, AMP, or fructose 2,6-bisphosphate, and allosterically inhibited by ATP or citrate. Functionally, catalyzes the phosphorylation of D-fructose 6-phosphate to fructose 1,6-bisphosphate by ATP, the first committing step of glycolysis. In Oryctolagus cuniculus (Rabbit), this protein is ATP-dependent 6-phosphofructokinase, platelet type (PFKP).